Consider the following 314-residue polypeptide: Thymidylate synthase (314 aa).

DUMP-binding positions include R21 and 176 to 177 (RR). The active-site Nucleophile is the C196. DUMP-binding positions include 216 to 219 (RSAD), N227, and 257 to 259 (HLY). Position 219 (D219) interacts with (6R)-5,10-methylene-5,6,7,8-tetrahydrofolate. S313 is a binding site for (6R)-5,10-methylene-5,6,7,8-tetrahydrofolate.

Belongs to the thymidylate synthase family. Bacterial-type ThyA subfamily. In terms of assembly, homodimer.

It is found in the cytoplasm. The catalysed reaction is dUMP + (6R)-5,10-methylene-5,6,7,8-tetrahydrofolate = 7,8-dihydrofolate + dTMP. It functions in the pathway pyrimidine metabolism; dTTP biosynthesis. Catalyzes the reductive methylation of 2'-deoxyuridine-5'-monophosphate (dUMP) to 2'-deoxythymidine-5'-monophosphate (dTMP) while utilizing 5,10-methylenetetrahydrofolate (mTHF) as the methyl donor and reductant in the reaction, yielding dihydrofolate (DHF) as a by-product. This enzymatic reaction provides an intracellular de novo source of dTMP, an essential precursor for DNA biosynthesis. The chain is Thymidylate synthase from Listeria monocytogenes serotype 4a (strain HCC23).